A 1865-amino-acid polypeptide reads, in one-letter code: Dedicator of cytokinesis protein 1 (1865 aa).

The SH3 domain maps to 9-70; that stretch reads REEKYGVAFY…PASYIHLKEA (62 aa). A C2 DOCK-type domain is found at 425 to 609; sequence RNDIYVTLVQ…DSFQISTLVC (185 aa). The 411-residue stretch at 1207-1617 folds into the DOCKER domain; sequence YKEIEREEMY…VEKQYGVRTM (411 aa). A disordered region spans residues 1613 to 1723; that stretch reads GVRTMPSGLD…FKPADSSLQQ (111 aa). The segment covering 1639-1664 has biased composition (low complexity); the sequence is PSSSRPLSVASVSSFSSDSTPSRPGS. Positions 1680 to 1694 are enriched in basic and acidic residues; sequence RSQDKLDKDDPDKEK. Ser1681 carries the post-translational modification Phosphoserine. Residues 1687–1695 form a phosphoinositide-binding region; the sequence is KDDPDKEKK. A compositionally biased stretch (basic residues) spans 1695 to 1704; it reads KDKKKEKRNS. Positions 1705-1716 are enriched in basic and acidic residues; it reads KHQEIFDKEFKP. A phosphoserine mark is found at Ser1743, Ser1756, Ser1761, and Ser1764. Disordered stretches follow at residues 1753 to 1778 and 1801 to 1865; these read RRFSVSPASPSSQQTPPPVTPRAKLS and PLPL…GIVQ. A compositionally biased stretch (low complexity) spans 1756 to 1766; it reads SVSPASPSSQQ. A phosphothreonine mark is found at Thr1767 and Thr1772. The interaction with NCK2 second and third SH3 domain (minor) stretch occupies residues 1793 to 1819; sequence MDVADVPPPLPLKGNMADYGNLMENQD. An SH3-binding; interaction with CRK motif is present at residues 1799 to 1805; that stretch reads PPPLPLK. The interaction with NCK2 third SH3 domain (major) stretch occupies residues 1820–1836; it reads MMVSPTSPPPPPPQRQQ. Residues 1825–1851 are compositionally biased toward pro residues; the sequence is TSPPPPPPQRQQPPPLPSKTPPPPPPK. The interaction with NCK2 (minor) stretch occupies residues 1837-1852; sequence PPPLPSKTPPPPPPKT. An SH3-binding; interaction with CRK motif is present at residues 1838–1843; the sequence is PPLPSK. Phosphoserine is present on Ser1858.

It belongs to the DOCK family. As to quaternary structure, interacts with the SH3 domains of CRK and NCK2 via multiple sites. Interacts with nucleotide-free RAC1 via its DOCKER domain. Interacts with ELMO1, ELMO2 and probably ELMO3 via its SH3 domain. Interacts with RAC1. Interacts with ELMO1 and ADGRB1. Identified in a complex with AUTS2 and ELMO2.

The protein resides in the cytoplasm. The protein localises to the membrane. Involved in cytoskeletal rearrangements required for phagocytosis of apoptotic cells and cell motility. Along with DOCK1, mediates CRK/CRKL regulation of epithelial and endothelial cell spreading and migration on type IV collagen. Functions as a guanine nucleotide exchange factor (GEF), which activates Rac Rho small GTPases by exchanging bound GDP for free GTP. Its GEF activity may be enhanced by ELMO1. In Mus musculus (Mouse), this protein is Dedicator of cytokinesis protein 1 (Dock1).